Reading from the N-terminus, the 30-residue chain is Alanine carboxypeptidase (30 aa).

It carries out the reaction Release of a C-terminal alanine from a peptide or a variety of pteroyl or acyl groups.. This chain is Alanine carboxypeptidase, found in Geobacillus stearothermophilus (Bacillus stearothermophilus).